A 355-amino-acid polypeptide reads, in one-letter code: Protein RecA (355 aa).

Gly-65 to Thr-72 lines the ATP pocket.

The protein belongs to the RecA family.

The protein localises to the cytoplasm. Can catalyze the hydrolysis of ATP in the presence of single-stranded DNA, the ATP-dependent uptake of single-stranded DNA by duplex DNA, and the ATP-dependent hybridization of homologous single-stranded DNAs. It interacts with LexA causing its activation and leading to its autocatalytic cleavage. The chain is Protein RecA from Pseudomonas putida (Arthrobacter siderocapsulatus).